A 328-amino-acid polypeptide reads, in one-letter code: Nicotianamine synthase 1 (328 aa).

It belongs to the nicotianamine synthase (NAS)-like family. In roots but not in leaves.

It catalyses the reaction 3 S-adenosyl-L-methionine = nicotianamine + 3 S-methyl-5'-thioadenosine + 3 H(+). Functionally, synthesizes nicotianamine, a polyamine that is the first intermediate in the synthesis of the phytosiderophores of the mugineic acid type found in gramineae which serves as a sensor for the physiological iron status within the plant, and/or might be involved in the transport of iron. This chain is Nicotianamine synthase 1 (NAS1), found in Hordeum vulgare (Barley).